A 97-amino-acid polypeptide reads, in one-letter code: Aspartyl/glutamyl-tRNA(Asn/Gln) amidotransferase subunit C (97 aa).

Belongs to the GatC family. As to quaternary structure, heterotrimer of A, B and C subunits.

The enzyme catalyses L-glutamyl-tRNA(Gln) + L-glutamine + ATP + H2O = L-glutaminyl-tRNA(Gln) + L-glutamate + ADP + phosphate + H(+). It carries out the reaction L-aspartyl-tRNA(Asn) + L-glutamine + ATP + H2O = L-asparaginyl-tRNA(Asn) + L-glutamate + ADP + phosphate + 2 H(+). Allows the formation of correctly charged Asn-tRNA(Asn) or Gln-tRNA(Gln) through the transamidation of misacylated Asp-tRNA(Asn) or Glu-tRNA(Gln) in organisms which lack either or both of asparaginyl-tRNA or glutaminyl-tRNA synthetases. The reaction takes place in the presence of glutamine and ATP through an activated phospho-Asp-tRNA(Asn) or phospho-Glu-tRNA(Gln). The chain is Aspartyl/glutamyl-tRNA(Asn/Gln) amidotransferase subunit C from Prochlorococcus marinus (strain SARG / CCMP1375 / SS120).